Consider the following 255-residue polypeptide: MDIDPYSVLGVEKDASDELIRRAYRKKALQHHPDRIHDEEKKVEARIEFDKVAIAYGVLSDKKRRKHYDKTGQLRETDADIDFDWKEWLDELYQGVVSGETLNEFKASYQYSEEEKCDVLKAYEKGKGSMDVILEEVMCCEISDEDRFRQVINNAIKDGKISKYKRFAPNEKKRKRRAKAAEREAQEAEELSMELGLDENLKKRRKAGASDEEALSALIRSRQKSRMYNLISNLESKYSKSSTKPKKSKKSRSKE.

Residues 4–72 (DPYSVLGVEK…KRRKHYDKTG (69 aa)) form the J domain. Composition is skewed to basic residues over residues 167 to 178 (FAPNEKKRKRRA) and 243 to 255 (TKPKKSKKSRSKE). Disordered stretches follow at residues 167-215 (FAPN…EEAL) and 230-255 (LISNLESKYSKSSTKPKKSKKSRSKE).

This sequence belongs to the DnaJ family.

It is found in the nucleus. The protein localises to the nucleolus. This is an uncharacterized protein from Schizosaccharomyces pombe (strain 972 / ATCC 24843) (Fission yeast).